Consider the following 778-residue polypeptide: Lon protease (778 aa).

One can recognise a Lon N-terminal domain in the interval 8–202 (LPLIPLRGLI…NVLTVIKDEL (195 aa)). 354 to 361 (GPPGVGKT) serves as a coordination point for ATP. Residues 591–772 (EDKIGVVTGM…DTVLENALIG (182 aa)) enclose the Lon proteolytic domain. Active-site residues include Ser678 and Lys721.

The protein belongs to the peptidase S16 family. As to quaternary structure, homohexamer. Organized in a ring with a central cavity.

It is found in the cytoplasm. The enzyme catalyses Hydrolysis of proteins in presence of ATP.. In terms of biological role, ATP-dependent serine protease that mediates the selective degradation of mutant and abnormal proteins as well as certain short-lived regulatory proteins. Required for cellular homeostasis and for survival from DNA damage and developmental changes induced by stress. Degrades polypeptides processively to yield small peptide fragments that are 5 to 10 amino acids long. Binds to DNA in a double-stranded, site-specific manner. This Clostridium acetobutylicum (strain ATCC 824 / DSM 792 / JCM 1419 / IAM 19013 / LMG 5710 / NBRC 13948 / NRRL B-527 / VKM B-1787 / 2291 / W) protein is Lon protease.